Here is a 340-residue protein sequence, read N- to C-terminus: Aliphatic sulfonates import ATP-binding protein SsuB 1 (340 aa).

The segment at 44-72 (THHHARVAAQGHARGDAQPPAGALARDDG) is disordered. The ABC transporter domain maps to 80–299 (VQLRGVGKRY…ARASAGFAAL (220 aa)). 112–119 (GRSGCGKS) contributes to the ATP binding site.

This sequence belongs to the ABC transporter superfamily. Aliphatic sulfonates importer (TC 3.A.1.17.2) family. In terms of assembly, the complex is composed of two ATP-binding proteins (SsuB), two transmembrane proteins (SsuC) and a solute-binding protein (SsuA).

The protein localises to the cell inner membrane. The catalysed reaction is ATP + H2O + aliphatic sulfonate-[sulfonate-binding protein]Side 1 = ADP + phosphate + aliphatic sulfonateSide 2 + [sulfonate-binding protein]Side 1.. Functionally, part of the ABC transporter complex SsuABC involved in aliphatic sulfonates import. Responsible for energy coupling to the transport system. This chain is Aliphatic sulfonates import ATP-binding protein SsuB 1, found in Paraburkholderia xenovorans (strain LB400).